We begin with the raw amino-acid sequence, 150 residues long: 3-dehydroquinate dehydratase (150 aa).

Tyr26 serves as the catalytic Proton acceptor. Substrate contacts are provided by Asn77, His83, and Asp90. The Proton donor role is filled by His103. Substrate contacts are provided by residues 104–105 and Arg114; that span reads LS.

Belongs to the type-II 3-dehydroquinase family. Homododecamer.

It catalyses the reaction 3-dehydroquinate = 3-dehydroshikimate + H2O. Its pathway is metabolic intermediate biosynthesis; chorismate biosynthesis; chorismate from D-erythrose 4-phosphate and phosphoenolpyruvate: step 3/7. Catalyzes a trans-dehydration via an enolate intermediate. The chain is 3-dehydroquinate dehydratase from Vibrio cholerae serotype O1 (strain ATCC 39541 / Classical Ogawa 395 / O395).